A 352-amino-acid chain; its full sequence is Fructose-1,6-bisphosphatase class 1 (352 aa).

Residues glutamate 111, aspartate 133, isoleucine 135, and aspartate 136 each contribute to the Mg(2+) site. Substrate contacts are provided by residues 136–139 (DGSS), asparagine 228, tyrosine 256, and lysine 286. Glutamate 292 is a binding site for Mg(2+).

Belongs to the FBPase class 1 family. As to quaternary structure, homotetramer. It depends on Mg(2+) as a cofactor.

It is found in the cytoplasm. The enzyme catalyses beta-D-fructose 1,6-bisphosphate + H2O = beta-D-fructose 6-phosphate + phosphate. It functions in the pathway carbohydrate biosynthesis; Calvin cycle. The protein is Fructose-1,6-bisphosphatase class 1 of Crocosphaera subtropica (strain ATCC 51142 / BH68) (Cyanothece sp. (strain ATCC 51142)).